Here is a 380-residue protein sequence, read N- to C-terminus: Cytochrome b (380 aa).

Helical transmembrane passes span 34 to 54, 78 to 99, 114 to 134, and 179 to 199; these read FGSL…LLAM, WLIR…YMHI, WNTG…GYVL, and FFAL…IHLT. Positions 84 and 98 each coordinate heme b. Histidine 183 and histidine 197 together coordinate heme b. Residue histidine 202 participates in a ubiquinone binding. 4 helical membrane-spanning segments follow: residues 227-247, 289-309, 321-341, and 348-368; these read LKDI…ALFT, LGGV…PLLH, LSQS…WVGS, and FIII…ILLP.

This sequence belongs to the cytochrome b family. In terms of assembly, the cytochrome bc1 complex contains 11 subunits: 3 respiratory subunits (MT-CYB, CYC1 and UQCRFS1), 2 core proteins (UQCRC1 and UQCRC2) and 6 low-molecular weight proteins (UQCRH/QCR6, UQCRB/QCR7, UQCRQ/QCR8, UQCR10/QCR9, UQCR11/QCR10 and a cleavage product of UQCRFS1). This cytochrome bc1 complex then forms a dimer. Heme b is required as a cofactor.

The protein resides in the mitochondrion inner membrane. In terms of biological role, component of the ubiquinol-cytochrome c reductase complex (complex III or cytochrome b-c1 complex) that is part of the mitochondrial respiratory chain. The b-c1 complex mediates electron transfer from ubiquinol to cytochrome c. Contributes to the generation of a proton gradient across the mitochondrial membrane that is then used for ATP synthesis. The chain is Cytochrome b (MT-CYB) from Falco peregrinus (Peregrine falcon).